The following is a 421-amino-acid chain: Lipid II:glycine glycyltransferase (421 aa).

It belongs to the FemABX family. Monomer.

It is found in the cytoplasm. The catalysed reaction is beta-D-GlcNAc-(1-&gt;4)-Mur2Ac(oyl-L-Ala-D-isoglutaminyl-L-Lys-D-Ala-D-Ala)-di-trans,octa-cis-undecaprenyl diphosphate + glycyl-tRNA(Gly) = beta-D-GlcNAc-(1-&gt;4)-Mur2Ac(oyl-L-Ala-D-isoglutaminyl-L-Lys-(N(6)-Gly)-D-Ala-D-Ala)-di-trans,octa-cis-undecaprenyl diphosphate + tRNA(Gly) + H(+). Catalyzes the incorporation of the first glycine of the pentaglycine interpeptide bridge, which is characteristic of the S.aureus peptidoglycan. This glycine is added to the epsilon-amino group of the L-lysine of the membrane-bound lipid II intermediate (GlcNAc-(beta-1,4)-N-acetylmuramic acid(-L-Ala-D-iGln-L-Lys-D-Ala-D-Ala)-pyrophosphoryl-undecaprenol), using glycyl-tRNA(Gly) as donor, in a ribosome-independent mechanism. This is Lipid II:glycine glycyltransferase (femX) from Staphylococcus aureus (strain bovine RF122 / ET3-1).